A 158-amino-acid chain; its full sequence is Large ribosomal subunit protein uL15 (158 aa).

2 disordered regions span residues 1 to 53 (MRIH…FEGG) and 138 to 158 (ESAGGSCQDLSDTSNAPSNNE). The span at 23–35 (ISAGQGASGGFGM) shows a compositional bias: gly residues. Residues 145–158 (QDLSDTSNAPSNNE) are compositionally biased toward polar residues.

It belongs to the universal ribosomal protein uL15 family. In terms of assembly, part of the 50S ribosomal subunit.

In terms of biological role, binds to the 23S rRNA. This Crocosphaera subtropica (strain ATCC 51142 / BH68) (Cyanothece sp. (strain ATCC 51142)) protein is Large ribosomal subunit protein uL15.